Here is a 295-residue protein sequence, read N- to C-terminus: Phosphatidylserine decarboxylase proenzyme (295 aa).

Catalysis depends on charge relay system; for autoendoproteolytic cleavage activity residues Asp-90, His-147, and Ser-254. The active-site Schiff-base intermediate with substrate; via pyruvic acid; for decarboxylase activity is the Ser-254. Ser-254 bears the Pyruvic acid (Ser); by autocatalysis mark.

Belongs to the phosphatidylserine decarboxylase family. PSD-B subfamily. Prokaryotic type I sub-subfamily. Heterodimer of a large membrane-associated beta subunit and a small pyruvoyl-containing alpha subunit. Pyruvate is required as a cofactor. In terms of processing, is synthesized initially as an inactive proenzyme. Formation of the active enzyme involves a self-maturation process in which the active site pyruvoyl group is generated from an internal serine residue via an autocatalytic post-translational modification. Two non-identical subunits are generated from the proenzyme in this reaction, and the pyruvate is formed at the N-terminus of the alpha chain, which is derived from the carboxyl end of the proenzyme. The autoendoproteolytic cleavage occurs by a canonical serine protease mechanism, in which the side chain hydroxyl group of the serine supplies its oxygen atom to form the C-terminus of the beta chain, while the remainder of the serine residue undergoes an oxidative deamination to produce ammonia and the pyruvoyl prosthetic group on the alpha chain. During this reaction, the Ser that is part of the protease active site of the proenzyme becomes the pyruvoyl prosthetic group, which constitutes an essential element of the active site of the mature decarboxylase.

The protein resides in the cell membrane. It carries out the reaction a 1,2-diacyl-sn-glycero-3-phospho-L-serine + H(+) = a 1,2-diacyl-sn-glycero-3-phosphoethanolamine + CO2. Its pathway is phospholipid metabolism; phosphatidylethanolamine biosynthesis; phosphatidylethanolamine from CDP-diacylglycerol: step 2/2. In terms of biological role, catalyzes the formation of phosphatidylethanolamine (PtdEtn) from phosphatidylserine (PtdSer). This is Phosphatidylserine decarboxylase proenzyme from Sodalis glossinidius (strain morsitans).